Consider the following 272-residue polypeptide: Putative phosphoenolpyruvate synthase regulatory protein (272 aa).

ADP is bound at residue G152–T159.

This sequence belongs to the pyruvate, phosphate/water dikinase regulatory protein family. PSRP subfamily.

It carries out the reaction [pyruvate, water dikinase] + ADP = [pyruvate, water dikinase]-phosphate + AMP + H(+). The enzyme catalyses [pyruvate, water dikinase]-phosphate + phosphate + H(+) = [pyruvate, water dikinase] + diphosphate. In terms of biological role, bifunctional serine/threonine kinase and phosphorylase involved in the regulation of the phosphoenolpyruvate synthase (PEPS) by catalyzing its phosphorylation/dephosphorylation. In Pseudomonas putida (strain ATCC 47054 / DSM 6125 / CFBP 8728 / NCIMB 11950 / KT2440), this protein is Putative phosphoenolpyruvate synthase regulatory protein.